The primary structure comprises 525 residues: ATP synthase subunit alpha (525 aa).

An ATP-binding site is contributed by 169-176; the sequence is GDRQTGKT.

The protein belongs to the ATPase alpha/beta chains family. In terms of assembly, F-type ATPases have 2 components, CF(1) - the catalytic core - and CF(0) - the membrane proton channel. CF(1) has five subunits: alpha(3), beta(3), gamma(1), delta(1), epsilon(1). CF(0) has three main subunits: a(1), b(2) and c(9-12). The alpha and beta chains form an alternating ring which encloses part of the gamma chain. CF(1) is attached to CF(0) by a central stalk formed by the gamma and epsilon chains, while a peripheral stalk is formed by the delta and b chains.

Its subcellular location is the cell membrane. The enzyme catalyses ATP + H2O + 4 H(+)(in) = ADP + phosphate + 5 H(+)(out). Its function is as follows. Produces ATP from ADP in the presence of a proton gradient across the membrane. The alpha chain is a regulatory subunit. The polypeptide is ATP synthase subunit alpha (Mesoplasma florum (strain ATCC 33453 / NBRC 100688 / NCTC 11704 / L1) (Acholeplasma florum)).